A 674-amino-acid polypeptide reads, in one-letter code: DNA ligase (674 aa).

NAD(+) is bound by residues Asp-34 to Asp-38, Ser-82 to Leu-83, and Glu-107. Residue Lys-109 is the N6-AMP-lysine intermediate of the active site. Arg-130, Glu-170, Lys-286, and Lys-310 together coordinate NAD(+). Zn(2+) is bound by residues Cys-404, Cys-407, Cys-423, and Cys-429. One can recognise a BRCT domain in the interval Lys-593–Ala-674.

Belongs to the NAD-dependent DNA ligase family. LigA subfamily. Requires Mg(2+) as cofactor. The cofactor is Mn(2+).

The catalysed reaction is NAD(+) + (deoxyribonucleotide)n-3'-hydroxyl + 5'-phospho-(deoxyribonucleotide)m = (deoxyribonucleotide)n+m + AMP + beta-nicotinamide D-nucleotide.. Its function is as follows. DNA ligase that catalyzes the formation of phosphodiester linkages between 5'-phosphoryl and 3'-hydroxyl groups in double-stranded DNA using NAD as a coenzyme and as the energy source for the reaction. It is essential for DNA replication and repair of damaged DNA. This Corynebacterium aurimucosum (strain ATCC 700975 / DSM 44827 / CIP 107346 / CN-1) (Corynebacterium nigricans) protein is DNA ligase.